A 259-amino-acid chain; its full sequence is Autophagy-related protein 27 (259 aa).

The first 15 residues, 1-15 (MWFPILTWLVATAVA), serve as a signal peptide directing secretion. Residues 16-167 (LDCSAKDLDS…QVKSKAACVT (152 aa)) enclose the MRH domain. Topologically, residues 16 to 184 (LDCSAKDLDS…PKKPEDNGES (169 aa)) are lumenal. Disulfide bonds link cysteine 18/cysteine 57, cysteine 68/cysteine 75, and cysteine 135/cysteine 165. A helical transmembrane segment spans residues 185–205 (WGWFTWIFIFMVLFLSIYIIG). At 206 to 259 (GAWFQYNKGNAIDFQSALREVLENFVDLVRGLPSFIREIIEKVTGSNRGEYSAV) the chain is on the cytoplasmic side.

The protein belongs to the ATG27 family.

It is found in the cytoplasmic vesicle membrane. The protein localises to the golgi apparatus membrane. It localises to the mitochondrion membrane. Its subcellular location is the preautophagosomal structure membrane. In terms of biological role, effector of VPS34 phosphatidylinositol 3-phosphate kinase signaling. Regulates the cytoplasm to vacuole transport (Cvt) vesicle formation. Plays a role in ATG protein retrieval from the pre-autophagosomal structure (PAS) and is especially required for autophagy-dependent cycling of ATG9. The chain is Autophagy-related protein 27 (ATG27) from Meyerozyma guilliermondii (strain ATCC 6260 / CBS 566 / DSM 6381 / JCM 1539 / NBRC 10279 / NRRL Y-324) (Yeast).